The primary structure comprises 148 residues: Flavodoxin (148 aa).

A Flavodoxin-like domain is found at 4 to 145 (VLILFGSSTG…AVSAFAEDVL (142 aa)).

This sequence belongs to the flavodoxin family. FMN is required as a cofactor.

Low-potential electron donor to a number of redox enzymes. The chain is Flavodoxin from Desulfovibrio desulfuricans (strain ATCC 27774 / DSM 6949 / MB).